Reading from the N-terminus, the 1180-residue chain is Pesticidal crystal protein Cry4Aa (1180 aa).

This sequence belongs to the delta endotoxin family.

In terms of biological role, promotes colloidosmotic lysis by binding to the midgut epithelial cells of insects. The polypeptide is Pesticidal crystal protein Cry4Aa (cry4Aa) (Bacillus thuringiensis subsp. israelensis).